A 300-amino-acid polypeptide reads, in one-letter code: UPF0282 protein TON_1363 (300 aa).

The protein belongs to the UPF0282 family.

The polypeptide is UPF0282 protein TON_1363 (Thermococcus onnurineus (strain NA1)).